The sequence spans 148 residues: MKIINILFCLFLLLLNSCNSNDNDTLKNNAQQTKSRGKRDLTQKEATPEKPKSKEELLREKLSEDQKTHLDWLKEALGNDGEFDKFLGYDESKIKTALDHIKSELDKCNGNDADQQKTTFKQTVQGALSGGIDGFGSNNAVTTCGNGS.

The first 17 residues, 1-17 (MKIINILFCLFLLLLNS), serve as a signal peptide directing secretion. Residue cysteine 18 is the site of N-palmitoyl cysteine attachment. Cysteine 18 is lipidated: S-diacylglycerol cysteine. Positions 26–58 (LKNNAQQTKSRGKRDLTQKEATPEKPKSKEELL) are disordered. Residues 38–58 (KRDLTQKEATPEKPKSKEELL) show a composition bias toward basic and acidic residues.

This sequence belongs to the Multicopy lipoprotein (Mlp) family.

The protein resides in the cell outer membrane. In terms of biological role, an outer membrane protein that may participate in pathogenesis. Some human Lyme disease patients have antibodies against this protein. The Mlp proteins probably undergo intragenic recombination, generating new alleles. This is Lipoprotein MlpA (mlpA) from Borreliella burgdorferi (strain ATCC 35210 / DSM 4680 / CIP 102532 / B31) (Borrelia burgdorferi).